Here is a 165-residue protein sequence, read N- to C-terminus: 16S rRNA aminocarboxypropyltransferase (165 aa).

Thr17, Leu62, Leu83, and Thr102 together coordinate S-adenosyl-L-methionine.

Belongs to the TDD superfamily. TSR3 family.

It localises to the cytoplasm. The enzyme catalyses an N(1)-methylpseudouridine in rRNA + S-adenosyl-L-methionine = N(1)-methyl-N(3)-[(3S)-3-amino-3-carboxypropyl]pseudouridine in rRNA + S-methyl-5'-thioadenosine + H(+). Aminocarboxypropyltransferase that catalyzes the aminocarboxypropyl transfer on pseudouridine corresponding to position 914 in M.jannaschii 16S rRNA. It constitutes the last step in biosynthesis of the hypermodified N1-methyl-N3-(3-amino-3-carboxypropyl) pseudouridine (m1acp3-Psi). The chain is 16S rRNA aminocarboxypropyltransferase from Halobacterium salinarum (strain ATCC 700922 / JCM 11081 / NRC-1) (Halobacterium halobium).